The sequence spans 371 residues: Glycerol-3-phosphate dehydrogenase [NAD(+)] 2 (371 aa).

Residues 18–23 (GSGNWG), F50, and F106 contribute to the NAD(+) site. K129 serves as a coordination point for substrate. Residue A162 participates in NAD(+) binding. The Proton acceptor role is filled by K222. The NAD(+) site is built by R294 and Q323. 294-295 (RN) is a binding site for substrate.

Belongs to the NAD-dependent glycerol-3-phosphate dehydrogenase family. As to quaternary structure, interacts with human CFH/complement factor H; the interaction is direct and enables the pathogen to evade the host innate immune system. Interacts with human CFHR1/complement factor H-related protein 1; the interaction is direct. Interacts with human PLG/plasminogen; the interaction is direct and provides active plasmin on the surface of fungal cells.

It is found in the secreted. Its subcellular location is the cell wall. The protein resides in the cytoplasm. The protein localises to the peroxisome. The catalysed reaction is sn-glycerol 3-phosphate + NAD(+) = dihydroxyacetone phosphate + NADH + H(+). Its function is as follows. May catalyze the production and accumulation of glycerol during hyperosmotic stress conditions. Glycerol acts as a osmoregulator that prevents loss of water and turgor of the cells. Mediates evasion of the host innate immune system by binding inhibitory components of the host alternative complement system, in a manner dependent on estrogen-induced inhibition of EBP1. The chain is Glycerol-3-phosphate dehydrogenase [NAD(+)] 2 from Candida albicans (strain SC5314 / ATCC MYA-2876) (Yeast).